The chain runs to 270 residues: Glucosamine-6-phosphate deaminase (270 aa).

Asp-68 functions as the Proton acceptor; for enolization step in the catalytic mechanism. Asp-145 (for ring-opening step) is an active-site residue. The active-site Proton acceptor; for ring-opening step is the His-147. Catalysis depends on Glu-152, which acts as the For ring-opening step.

This sequence belongs to the glucosamine/galactosamine-6-phosphate isomerase family. NagB subfamily.

It carries out the reaction alpha-D-glucosamine 6-phosphate + H2O = beta-D-fructose 6-phosphate + NH4(+). It participates in amino-sugar metabolism; N-acetylneuraminate degradation; D-fructose 6-phosphate from N-acetylneuraminate: step 5/5. In terms of biological role, catalyzes the reversible isomerization-deamination of glucosamine 6-phosphate (GlcN6P) to form fructose 6-phosphate (Fru6P) and ammonium ion. In Bifidobacterium longum subsp. infantis (strain ATCC 15697 / DSM 20088 / JCM 1222 / NCTC 11817 / S12), this protein is Glucosamine-6-phosphate deaminase.